Consider the following 410-residue polypeptide: Putative formamidase C869.04 (410 aa).

The protein belongs to the acetamidase/formamidase family. In terms of assembly, homotrimer.

It localises to the cytoplasm. Its subcellular location is the nucleus. The catalysed reaction is formamide + H2O = formate + NH4(+). In terms of biological role, hydrolyzes formamide with the production of ammonia which can be used as a source of nitrogen for growth. May also act on acetamide, propanamide and butanamide. This chain is Putative formamidase C869.04, found in Schizosaccharomyces pombe (strain 972 / ATCC 24843) (Fission yeast).